The primary structure comprises 519 residues: Cobyric acid synthase (519 aa).

A GATase cobBQ-type domain is found at 256 to 438 (WLRVAVPRLP…WHGLFENDAF (183 aa)). The active-site Nucleophile is the cysteine 337. Residue histidine 430 is part of the active site.

The protein belongs to the CobB/CobQ family. CobQ subfamily.

It functions in the pathway cofactor biosynthesis; adenosylcobalamin biosynthesis. Functionally, catalyzes amidations at positions B, D, E, and G on adenosylcobyrinic A,C-diamide. NH(2) groups are provided by glutamine, and one molecule of ATP is hydrogenolyzed for each amidation. This Saccharopolyspora erythraea (strain ATCC 11635 / DSM 40517 / JCM 4748 / NBRC 13426 / NCIMB 8594 / NRRL 2338) protein is Cobyric acid synthase.